Here is a 462-residue protein sequence, read N- to C-terminus: L-seryl-tRNA(Sec) selenium transferase (462 aa).

At Lys-292 the chain carries N6-(pyridoxal phosphate)lysine.

Belongs to the SelA family. Requires pyridoxal 5'-phosphate as cofactor.

The protein localises to the cytoplasm. The catalysed reaction is L-seryl-tRNA(Sec) + selenophosphate + H(+) = L-selenocysteinyl-tRNA(Sec) + phosphate. Its pathway is aminoacyl-tRNA biosynthesis; selenocysteinyl-tRNA(Sec) biosynthesis; selenocysteinyl-tRNA(Sec) from L-seryl-tRNA(Sec) (bacterial route): step 1/1. Converts seryl-tRNA(Sec) to selenocysteinyl-tRNA(Sec) required for selenoprotein biosynthesis. This chain is L-seryl-tRNA(Sec) selenium transferase, found in Geobacter sulfurreducens (strain ATCC 51573 / DSM 12127 / PCA).